The chain runs to 1193 residues: Dynamin-like protein A (1193 aa).

The D1, associates with and fuses membranes, tethers lipsomes stretch occupies residues 1-609 (MTDQNRKELL…AFRERVKRLE (609 aa)). Positions 50 to 57 (GHYSAGKS) are G1 motif D1. The interval 76–78 (TSA) is G2 motif D1. Residues 141-144 (DTPG) form a G3 motif D1 region. Positions 199 to 202 (NQID) are G4 motif D1. The tract at residues 561-1193 (MPKSEIKMEQ…WKNSDNTIKM (633 aa)) is D2, does not associate with membranes. Residues 619-626 (GGFSSGKS) form a G1 motif D2 region. The G2 motif D2 stretch occupies residues 645 to 647 (TTA). A G3 motif D2 region spans residues 774–777 (DTPG). Residues 837–840 (NAAD) form a G4 motif D2 region.

Belongs to the TRAFAC class dynamin-like GTPase superfamily. Dynamin/Fzo/YdjA family. In terms of assembly, homodimer in solution. Both D1 and D2 domains interact with YwpG, YneK interacts only with D1 while RNase Y (rny) only interacts with whole protein. Probably oligomerizes at damaged membrane sites. Mg(2+) serves as cofactor.

Its subcellular location is the cell membrane. The catalysed reaction is GTP + H2O = GDP + phosphate + H(+). In terms of biological role, mediates lipid mixing of vesicles and full mixing of their contents in the absence and presence of GTP. Tethers and mixes small vesicles better than larger ones, indicating a curvature preference. GTP slows down DynA-mediated lipid fusion, perhaps controlling its activity. Prefers phospholipid composition close to the B.subtilis membrane; requires phosphatidylglycerol for fusion has no activity on pure phosphatidylethanolamine vesicles. Regulates membrane lipid diffusion. Required to prevent membrane damage when exposed to low levels of membrane-damaging antibiotics or to bacteriophage. Probably surveys the cell membrane for stress; localizes to sites of membrane damage (treatment with nisin) and forms foci in cells treated with pore-forming compounds (CCCP). May assist membrane repair, possibly by membrane tethering and fusion. Probably functions both in early and late cell division, affects the proper formation of the FtsZ ring. Plays a non-redundant role with flottilin (floT) in membrane dynamics and cell shape. Probably able to bend membranes. Tethers liposomes and mediates their fusion; this does not require GTPase activity or the presence of GTP. Both GTPase domains (dynamin-type G) are required for GTPase activity. Has intrinsic affinity for membranes and membrane distortion capability; causes tubulation and membrane distortion when expressed in a Drosophila cell line. The polypeptide is Dynamin-like protein A (Bacillus subtilis (strain 168)).